We begin with the raw amino-acid sequence, 314 residues long: Olfactory receptor 2Z1 (314 aa).

The Extracellular segment spans residues 1 to 25 (MGDVNQSVASDFILVGLFSHSGSRQ). The N-linked (GlcNAc...) asparagine glycan is linked to N5. The chain crosses the membrane as a helical span at residues 26–49 (LLFSLVAVMFVIGLLGNTVLLFLI). The Cytoplasmic portion of the chain corresponds to 50–57 (RVDSRLHT). Residues 58–79 (PMYFLLSQLSLFDIGCPMVTIP) form a helical membrane-spanning segment. Topologically, residues 80-100 (KMASDFLRGEGATSYGGGAAQ) are extracellular. The chain crosses the membrane as a helical span at residues 101–120 (IFFLTLMGVAEGVLLVLMSY). At 121–139 (DRYVAVCQPLQYPVLMRRQ) the chain is on the cytoplasmic side. A helical transmembrane segment spans residues 140 to 158 (VCLLMMGSSWVVGVLNASI). Residues 159 to 195 (QTSITLHFPYCASRIVDHFFCEVPALLKLSCADTCAY) lie on the Extracellular side of the membrane. Residues 196 to 219 (EMALSTSGVLILMLPLSLIATSYG) form a helical membrane-spanning segment. Residues 220 to 236 (HVLQAVLSMRSEEARHK) lie on the Cytoplasmic side of the membrane. Residues 237–259 (AVTTCSSHITVVGLFYGAAVFMY) form a helical membrane-spanning segment. Over 260–272 (MVPCAYHSPQQDN) the chain is Extracellular. Residues 273 to 292 (VVSLFYSLVTPTLNPLIYSL) form a helical membrane-spanning segment. Residues 293 to 314 (RNPEVWMALVKVLSRAGLRQMC) lie on the Cytoplasmic side of the membrane.

This sequence belongs to the G-protein coupled receptor 1 family.

The protein resides in the cell membrane. Odorant receptor. The sequence is that of Olfactory receptor 2Z1 (OR2Z1) from Homo sapiens (Human).